Reading from the N-terminus, the 263-residue chain is Small ribosomal subunit protein uS2 (263 aa).

Residues 228-263 form a disordered region; it reads QLEEPEADLADEDDNGMTTSDDGDAEALDIPDDSDA. Positions 230–263 are enriched in acidic residues; that stretch reads EEPEADLADEDDNGMTTSDDGDAEALDIPDDSDA.

This sequence belongs to the universal ribosomal protein uS2 family.

The protein is Small ribosomal subunit protein uS2 of Thermosynechococcus vestitus (strain NIES-2133 / IAM M-273 / BP-1).